The chain runs to 393 residues: tRNA(Met) cytidine acetate ligase (393 aa).

Residues glycine 81, asparagine 142, and arginine 167 each coordinate ATP.

It belongs to the TmcAL family.

It localises to the cytoplasm. The catalysed reaction is cytidine(34) in elongator tRNA(Met) + acetate + ATP = N(4)-acetylcytidine(34) in elongator tRNA(Met) + AMP + diphosphate. Functionally, catalyzes the formation of N(4)-acetylcytidine (ac(4)C) at the wobble position of elongator tRNA(Met), using acetate and ATP as substrates. First activates an acetate ion to form acetyladenylate (Ac-AMP) and then transfers the acetyl group to tRNA to form ac(4)C34. This is tRNA(Met) cytidine acetate ligase from Bacillus cereus (strain ATCC 14579 / DSM 31 / CCUG 7414 / JCM 2152 / NBRC 15305 / NCIMB 9373 / NCTC 2599 / NRRL B-3711).